A 499-amino-acid chain; its full sequence is MDLSTAFPTLVTDLPAAFSMSVVGGVGLAMIVLDAFRNDHPAIPWLGVAALGVSAVWEITHLGAPPSTVFFETLRTGGFVAFINLIILLTGLATILLSVPYLNQLRYDYGEVYALIMFCTVGMIMLGSANNMVSIFLGLETMSVCLYVLTGFIREDEGAVESALKYFLLGAFSTGFFLYGIALMYGATGTMALPAMAAAELGTLSTRLLFWGGFALFLVGFFFKVSAAPFHMWTPDVYQGAPTPLTGYMSTATKAAAFAALILVLVHAVPGGEWQLSVAAVAVLTMVIGNVMALAQTNVKRLLAYSSIAHAGYLLVGLSAGTSAGYAGALFYLLVYAVMNIGAFGVMSMLEWDGKEGREQTLSSLAGIANDRPVLGSTMGVFMLSLIGFPPLGGFIGKYLVFAPAVDAGLTWLVVIGVLMSALSAYYYLRVVYVFWMQSADEVAATDPVRAAAFPRATVAATGTLVVCAVALVVLGVFFGGVLETTLGFFETTAMATAP.

Helical transmembrane passes span 16–36, 42–62, 77–97, 109–129, 133–153, 167–187, 208–228, 252–272, 274–294, 302–322, 327–347, 376–396, 411–433, and 463–483; these read AAFS…LDAF, AIPW…ITHL, GGFV…TILL, YGEV…LGSA, VSIF…TGFI, FLLG…MYGA, LLFW…VSAA, ATKA…VPGG, WQLS…VMAL, LLAY…SAGT, AGAL…FGVM, GSTM…GGFI, TWLV…RVVY, and GTLV…GGVL.

It belongs to the complex I subunit 2 family. In terms of assembly, NDH-1 is composed of 14 different subunits. Subunits NuoA, H, J, K, L, M, N constitute the membrane sector of the complex.

The protein resides in the cell inner membrane. The enzyme catalyses a quinone + NADH + 5 H(+)(in) = a quinol + NAD(+) + 4 H(+)(out). Its function is as follows. NDH-1 shuttles electrons from NADH, via FMN and iron-sulfur (Fe-S) centers, to quinones in the respiratory chain. The immediate electron acceptor for the enzyme in this species is believed to be a menaquinone. Couples the redox reaction to proton translocation (for every two electrons transferred, four hydrogen ions are translocated across the cytoplasmic membrane), and thus conserves the redox energy in a proton gradient. The chain is NADH-quinone oxidoreductase subunit N from Salinibacter ruber (strain DSM 13855 / M31).